A 233-amino-acid polypeptide reads, in one-letter code: Uracil-DNA glycosylase (233 aa).

The Proton acceptor role is filled by Asp-70.

Belongs to the uracil-DNA glycosylase (UDG) superfamily. UNG family.

Its subcellular location is the cytoplasm. It carries out the reaction Hydrolyzes single-stranded DNA or mismatched double-stranded DNA and polynucleotides, releasing free uracil.. In terms of biological role, excises uracil residues from the DNA which can arise as a result of misincorporation of dUMP residues by DNA polymerase or due to deamination of cytosine. The polypeptide is Uracil-DNA glycosylase (Helicobacter acinonychis (strain Sheeba)).